The chain runs to 538 residues: Phosphoenolpyruvate carboxykinase (ATP) (538 aa).

Substrate-binding residues include R64, Y205, and K211. Residues K211, H230, and G246–T254 each bind ATP. Mn(2+)-binding residues include K211 and H230. Position 267 (D267) interacts with Mn(2+). Residues E295, R331, R447–I448, and T453 each bind ATP. R331 contributes to the substrate binding site.

It belongs to the phosphoenolpyruvate carboxykinase (ATP) family. As to quaternary structure, monomer. Mn(2+) serves as cofactor.

The protein resides in the cytoplasm. It carries out the reaction oxaloacetate + ATP = phosphoenolpyruvate + ADP + CO2. The protein operates within carbohydrate biosynthesis; gluconeogenesis. Involved in the gluconeogenesis. Catalyzes the conversion of oxaloacetate (OAA) to phosphoenolpyruvate (PEP) through direct phosphoryl transfer between the nucleoside triphosphate and OAA. This Haemophilus influenzae (strain ATCC 51907 / DSM 11121 / KW20 / Rd) protein is Phosphoenolpyruvate carboxykinase (ATP).